The sequence spans 215 residues: MSDNAQLSGLCDRFRGFYPVVIDVETAGFNAKTDALLEIAAITLKMDEQGWLMPDMTLHFHVEPFAGANLQPEALAFNGIDPSNPLRGAVSEYEALHAIFKMVRKGIKDSGCSRAIMVAHNATFDHSFMMAAAERASLKRNPFHPFVTFDTAALSGLALGQTVLSKACLAAGMEFDGEKAHSALYDTERTAVLFCEIVNRWKRLGGWPLPLPTDK.

Residues 20–194 (VVIDVETAGF…YDTERTAVLF (175 aa)) form the Exonuclease domain. The Mg(2+) site is built by Asp-23, Glu-25, His-181, and Asp-186. Catalysis depends on His-181, which acts as the Proton donor/acceptor.

Belongs to the RNase T family. As to quaternary structure, homodimer. Requires Mg(2+) as cofactor.

In terms of biological role, trims short 3' overhangs of a variety of RNA species, leaving a one or two nucleotide 3' overhang. Responsible for the end-turnover of tRNA: specifically removes the terminal AMP residue from uncharged tRNA (tRNA-C-C-A). Also appears to be involved in tRNA biosynthesis. The chain is Ribonuclease T from Salmonella paratyphi A (strain ATCC 9150 / SARB42).